Here is a 476-residue protein sequence, read N- to C-terminus: Bifunctional protein GlmU (476 aa).

Positions 1–232 are pyrophosphorylase; that stretch reads MGDLAAIILA…PVEVMGVNDR (232 aa). UDP-N-acetyl-alpha-D-glucosamine is bound by residues 9-12, Lys23, Gln75, and 80-81; these read LAAG and GT. Asp105 provides a ligand contact to Mg(2+). Residues Gly142, Glu157, Asn172, and Asn230 each coordinate UDP-N-acetyl-alpha-D-glucosamine. Position 230 (Asn230) interacts with Mg(2+). Positions 233–253 are linker; sequence AQLAEAGRFARQRINRELMLD. Positions 254–476 are N-acetyltransferase; sequence GVTIVDPAAT…DGWKLKQRDQ (223 aa). Residues Arg353 and Lys371 each contribute to the UDP-N-acetyl-alpha-D-glucosamine site. His383 (proton acceptor) is an active-site residue. UDP-N-acetyl-alpha-D-glucosamine contacts are provided by Tyr386 and Asn397. Acetyl-CoA contacts are provided by residues 406–407, Ser425, Ala443, and Arg460; that span reads NY.

In the N-terminal section; belongs to the N-acetylglucosamine-1-phosphate uridyltransferase family. The protein in the C-terminal section; belongs to the transferase hexapeptide repeat family. In terms of assembly, homotrimer. It depends on Mg(2+) as a cofactor.

The protein localises to the cytoplasm. It carries out the reaction alpha-D-glucosamine 1-phosphate + acetyl-CoA = N-acetyl-alpha-D-glucosamine 1-phosphate + CoA + H(+). It catalyses the reaction N-acetyl-alpha-D-glucosamine 1-phosphate + UTP + H(+) = UDP-N-acetyl-alpha-D-glucosamine + diphosphate. It functions in the pathway nucleotide-sugar biosynthesis; UDP-N-acetyl-alpha-D-glucosamine biosynthesis; N-acetyl-alpha-D-glucosamine 1-phosphate from alpha-D-glucosamine 6-phosphate (route II): step 2/2. Its pathway is nucleotide-sugar biosynthesis; UDP-N-acetyl-alpha-D-glucosamine biosynthesis; UDP-N-acetyl-alpha-D-glucosamine from N-acetyl-alpha-D-glucosamine 1-phosphate: step 1/1. The protein operates within bacterial outer membrane biogenesis; LPS lipid A biosynthesis. Its function is as follows. Catalyzes the last two sequential reactions in the de novo biosynthetic pathway for UDP-N-acetylglucosamine (UDP-GlcNAc). The C-terminal domain catalyzes the transfer of acetyl group from acetyl coenzyme A to glucosamine-1-phosphate (GlcN-1-P) to produce N-acetylglucosamine-1-phosphate (GlcNAc-1-P), which is converted into UDP-GlcNAc by the transfer of uridine 5-monophosphate (from uridine 5-triphosphate), a reaction catalyzed by the N-terminal domain. This Geobacter metallireducens (strain ATCC 53774 / DSM 7210 / GS-15) protein is Bifunctional protein GlmU.